Here is a 106-residue protein sequence, read N- to C-terminus: ATP-dependent Clp protease adapter protein ClpS (106 aa).

The protein belongs to the ClpS family. As to quaternary structure, binds to the N-terminal domain of the chaperone ClpA.

Its function is as follows. Involved in the modulation of the specificity of the ClpAP-mediated ATP-dependent protein degradation. The protein is ATP-dependent Clp protease adapter protein ClpS of Edwardsiella ictaluri (strain 93-146).